Reading from the N-terminus, the 371-residue chain is UDP-N-acetylglucosamine--N-acetylmuramyl-(pentapeptide) pyrophosphoryl-undecaprenol N-acetylglucosamine transferase (371 aa).

Residues 10–12 (TGG), asparagine 124, arginine 165, serine 191, isoleucine 246, and glutamine 291 each bind UDP-N-acetyl-alpha-D-glucosamine.

This sequence belongs to the glycosyltransferase 28 family. MurG subfamily.

It localises to the cell inner membrane. The enzyme catalyses di-trans,octa-cis-undecaprenyl diphospho-N-acetyl-alpha-D-muramoyl-L-alanyl-D-glutamyl-meso-2,6-diaminopimeloyl-D-alanyl-D-alanine + UDP-N-acetyl-alpha-D-glucosamine = di-trans,octa-cis-undecaprenyl diphospho-[N-acetyl-alpha-D-glucosaminyl-(1-&gt;4)]-N-acetyl-alpha-D-muramoyl-L-alanyl-D-glutamyl-meso-2,6-diaminopimeloyl-D-alanyl-D-alanine + UDP + H(+). The protein operates within cell wall biogenesis; peptidoglycan biosynthesis. Its function is as follows. Cell wall formation. Catalyzes the transfer of a GlcNAc subunit on undecaprenyl-pyrophosphoryl-MurNAc-pentapeptide (lipid intermediate I) to form undecaprenyl-pyrophosphoryl-MurNAc-(pentapeptide)GlcNAc (lipid intermediate II). This Geobacter sp. (strain M21) protein is UDP-N-acetylglucosamine--N-acetylmuramyl-(pentapeptide) pyrophosphoryl-undecaprenol N-acetylglucosamine transferase.